The primary structure comprises 741 residues: MKKPFTGLLMKRGTLSSFRNFIQLFSLQSRGLSFSTLTDTRPFPDYSPKKASVRDTEFVHQITNVIKLRRAEPLRRSLKPYECKFKTDHLIWVLMKIKCDYRLVLDFFDWARSRRDSNLESLCIVIHLAVASKDLKVAQSLISSFWERPKLNVTDSFVQFFDLLVYTYKDWGSDPRVFDVFFQVLVDFGLLREARRVFEKMLNYGLVLSVDSCNVYLTRLSKDCYKTATAIIVFREFPEVGVCWNVASYNIVIHFVCQLGRIKEAHHLLLLMELKGYTPDVISYSTVVNGYCRFGELDKVWKLIEVMKRKGLKPNSYIYGSIIGLLCRICKLAEAEEAFSEMIRQGILPDTVVYTTLIDGFCKRGDIRAASKFFYEMHSRDITPDVLTYTAIISGFCQIGDMVEAGKLFHEMFCKGLEPDSVTFTELINGYCKAGHMKDAFRVHNHMIQAGCSPNVVTYTTLIDGLCKEGDLDSANELLHEMWKIGLQPNIFTYNSIVNGLCKSGNIEEAVKLVGEFEAAGLNADTVTYTTLMDAYCKSGEMDKAQEILKEMLGKGLQPTIVTFNVLMNGFCLHGMLEDGEKLLNWMLAKGIAPNATTFNSLVKQYCIRNNLKAATAIYKDMCSRGVGPDGKTYENLVKGHCKARNMKEAWFLFQEMKGKGFSVSVSTYSVLIKGFLKRKKFLEAREVFDQMRREGLAADKEIFDFFSDTKYKGKRPDTIVDPIDEIIENYLVDEQLRGAN.

Residues 1 to 21 (MKKPFTGLLMKRGTLSSFRNF) constitute a mitochondrion transit peptide. 15 PPR repeats span residues 174–208 (DPRV…GLVL), 209–244 (SVDS…GVCW), 245–279 (NVAS…GYTP), 280–314 (DVIS…GLKP), 315–349 (NSYI…GILP), 350–384 (DTVV…DITP), 385–419 (DVLT…GLEP), 420–454 (DSVT…GCSP), 455–489 (NVVT…GLQP), 490–524 (NIFT…GLNA), 525–559 (DTVT…GLQP), 560–594 (TIVT…GIAP), 595–629 (NATT…GVGP), 630–664 (DGKT…GFSV), and 665–699 (SVST…GLAA).

It belongs to the PPR family. P subfamily.

Its subcellular location is the mitochondrion. In Arabidopsis thaliana (Mouse-ear cress), this protein is Pentatricopeptide repeat-containing protein At1g05670, mitochondrial.